Here is a 326-residue protein sequence, read N- to C-terminus: Macrosialin (326 aa).

Residues 1-20 (MRLPVCLILLGPLIAQGTEE) form the signal peptide. Residues 21-109 (DCPHKKAVTL…ATSPRSSTVG (89 aa)) are mucin-like. The Extracellular segment spans residues 21-291 (DCPHKKAVTL…PCFSCNRDQS (271 aa)). The segment covering 38–58 (PTATESTASPTTSHRPTTTSH) has biased composition (low complexity). Residues 38-129 (PTATESTASP…SPRSKGALGN (92 aa)) form a disordered region. 4 consecutive repeat copies span residues 44–49 (TASPTT), 50–64 (SHRP…VTVH), 65–72 (TSSGPTTV), and 73–88 (THNP…ATIS). Positions 59 to 69 (GNVTVHTSSGP) are enriched in polar residues. N60 carries N-linked (GlcNAc...) asparagine glycosylation. The segment covering 70–80 (TTVTHNPATTT) has biased composition (low complexity). Over residues 81 to 108 (SHGNATISHATVSPTTNGTATSPRSSTV) the composition is skewed to polar residues. N84 and N97 each carry an N-linked (GlcNAc...) asparagine glycan. The span at 111-120 (HPGPPPPSPS) shows a compositional bias: pro residues. Residues N129, N134, N169, N218, N233, and N251 are each glycosylated (N-linked (GlcNAc...) asparagine). A disulfide bridge links C139 with C177. A disulfide bridge links C249 with C286. The chain crosses the membrane as a helical span at residues 292–316 (LLLPLIIGLVLLGLLTLVLIAFCIT). Residues 317–326 (RRRQSTYQPL) are Cytoplasmic-facing.

It belongs to the LAMP family. Post-translationally, N- and O-glycosylated. As to expression, expressed in tissue macrophages and to a lesser extent in dendritic cells.

Its subcellular location is the endosome membrane. It is found in the lysosome membrane. The protein resides in the cell membrane. Could play a role in phagocytic activities of tissue macrophages, both in intracellular lysosomal metabolism and extracellular cell-cell and cell-pathogen interactions. Binds to tissue- and organ-specific lectins or selectins, allowing homing of macrophage subsets to particular sites. Rapid recirculation of CD68 from endosomes and lysosomes to the plasma membrane may allow macrophages to crawl over selectin-bearing substrates or other cells. In Mus musculus (Mouse), this protein is Macrosialin (Cd68).